A 139-amino-acid chain; its full sequence is Large ribosomal subunit protein uL16 (139 aa).

Residues 1–21 (MLSPRKTKFRKQHRGRMRGKA) show a composition bias toward basic residues. A disordered region spans residues 1–23 (MLSPRKTKFRKQHRGRMRGKATR).

Belongs to the universal ribosomal protein uL16 family. As to quaternary structure, part of the 50S ribosomal subunit.

Binds 23S rRNA and is also seen to make contacts with the A and possibly P site tRNAs. In Acaryochloris marina (strain MBIC 11017), this protein is Large ribosomal subunit protein uL16.